Consider the following 294-residue polypeptide: Cytidine deaminase (294 aa).

CMP/dCMP-type deaminase domains lie at Asp48–Lys168 and Leu186–Gly294. Asn89 to Glu91 contacts substrate. Residue His102 participates in Zn(2+) binding. The Proton donor role is filled by Glu104. Positions 129 and 132 each coordinate Zn(2+).

Belongs to the cytidine and deoxycytidylate deaminase family. As to quaternary structure, homodimer. Zn(2+) serves as cofactor.

It carries out the reaction cytidine + H2O + H(+) = uridine + NH4(+). It catalyses the reaction 2'-deoxycytidine + H2O + H(+) = 2'-deoxyuridine + NH4(+). This enzyme scavenges exogenous and endogenous cytidine and 2'-deoxycytidine for UMP synthesis. The protein is Cytidine deaminase of Salmonella dublin (strain CT_02021853).